Consider the following 155-residue polypeptide: Ribonuclease H (155 aa).

Positions 1 to 142 (MLKQVEIFTD…CDELARAAAM (142 aa)) constitute an RNase H type-1 domain. Residues D10, E48, D70, and D134 each coordinate Mg(2+).

Belongs to the RNase H family. As to quaternary structure, monomer. Requires Mg(2+) as cofactor.

It is found in the cytoplasm. The catalysed reaction is Endonucleolytic cleavage to 5'-phosphomonoester.. In terms of biological role, endonuclease that specifically degrades the RNA of RNA-DNA hybrids. The chain is Ribonuclease H from Salmonella paratyphi A (strain AKU_12601).